A 156-amino-acid chain; its full sequence is Small ribosomal subunit protein uS7 (156 aa).

It belongs to the universal ribosomal protein uS7 family. As to quaternary structure, part of the 30S ribosomal subunit. Contacts proteins S9 and S11.

Functionally, one of the primary rRNA binding proteins, it binds directly to 16S rRNA where it nucleates assembly of the head domain of the 30S subunit. Is located at the subunit interface close to the decoding center, probably blocks exit of the E-site tRNA. This Sinorhizobium medicae (strain WSM419) (Ensifer medicae) protein is Small ribosomal subunit protein uS7.